We begin with the raw amino-acid sequence, 557 residues long: Organic cation/carnitine transporter 2 (557 aa).

Topologically, residues 1–20 are cytoplasmic; the sequence is MRDYDEVTAFLGEWGPFQRL. Residues 21 to 41 form a helical membrane-spanning segment; sequence IFFLLSASIIPNGFNGMSIVF. The Extracellular segment spans residues 42-142; the sequence is LAGTPEHRCL…DLVCKDDWKA (101 aa). N-linked (GlcNAc...) asparagine glycans are attached at residues Asn57, Asn64, and Asn91. A helical transmembrane segment spans residues 143–163; sequence PLTTSLFFVGVLMGSFISGQL. Residues 164 to 172 lie on the Cytoplasmic side of the membrane; it reads SDRFGRKNV. Residues 173 to 193 form a helical membrane-spanning segment; the sequence is LFLTMGMQTGFSFLQVFSVNF. Residues 194–197 lie on the Extracellular side of the membrane; sequence EMFT. The chain crosses the membrane as a helical span at residues 198-218; the sequence is VLFVLVGMGQISNYVAAFVLG. 218–225 contributes to the ATP binding site; that stretch reads GTEILSKS. The Cytoplasmic portion of the chain corresponds to 219–232; the sequence is TEILSKSIRIIFAT. The helical transmembrane segment at 233 to 253 threads the bilayer; it reads LGVCIFYAFGFMVLPLFAYFI. Topologically, residues 254–257 are extracellular; sequence RDWR. A helical transmembrane segment spans residues 258–278; sequence MLLLALTVPGVLCGALWWFIP. The Cytoplasmic portion of the chain corresponds to 279–341; sequence ESPRWLISQG…YDLIRTRNIR (63 aa). A helical membrane pass occupies residues 342–362; that stretch reads VITIMSIILWLTISVGYFGLS. The Extracellular portion of the chain corresponds to 363-373; it reads LDTPNLHGDIY. The chain crosses the membrane as a helical span at residues 374–394; the sequence is VNCFLLAAVEVPAYVLAWLLL. Topologically, residues 395 to 406 are cytoplasmic; it reads QYLPRRYSISAA. The helical transmembrane segment at 407–427 threads the bilayer; it reads LFLGGSVLLFMQLVPSELFYL. At 428 to 430 the chain is on the extracellular side; that stretch reads STA. A helical membrane pass occupies residues 431–451; sequence LVMVGKFGITSAYSMVYVYTA. Over 452–462 the chain is Cytoplasmic; sequence ELYPTVVRNMG. A helical membrane pass occupies residues 463 to 483; the sequence is VGVSSTASRLGSILSPYFVYL. The Extracellular portion of the chain corresponds to 484–488; that stretch reads GAYDR. At Tyr486 the chain carries Phosphotyrosine. A helical transmembrane segment spans residues 489–509; the sequence is FLPYILMGSLTILTAILTLFF. The Cytoplasmic portion of the chain corresponds to 510-557; that stretch reads PESFGVPLPDTIDQMLRVKGIKQWQIQSQTRMQKDGEESPTVLKSTAF. Ser548 bears the Phosphoserine mark. Thr550 carries the phosphothreonine modification.

It belongs to the major facilitator (TC 2.A.1) superfamily. Organic cation transporter (TC 2.A.1.19) family. In terms of assembly, interacts with PDZK1. Widely expressed. Expressed in kidney, liver and testis. Expressed at the brush border of the small, large intestine and colon (at protein level).

The protein localises to the apical cell membrane. It localises to the basal cell membrane. The protein resides in the cell membrane. It carries out the reaction (R)-carnitine(out) + Na(+)(out) = (R)-carnitine(in) + Na(+)(in). The enzyme catalyses glycine betaine(out) + Na(+)(out) = glycine betaine(in) + Na(+)(in). It catalyses the reaction glycine betaine(out) + (R)-carnitine(in) = glycine betaine(in) + (R)-carnitine(out). The catalysed reaction is O-butanoyl-(R)-carnitine(out) + Na(+)(out) = O-butanoyl-(R)-carnitine(in) + Na(+)(in). It carries out the reaction O-acetyl-(R)-carnitine(out) + Na(+)(out) = O-acetyl-(R)-carnitine(in) + Na(+)(in). The enzyme catalyses O-propanoyl-(R)-carnitine(out) + Na(+)(out) = O-propanoyl-(R)-carnitine(in) + Na(+)(in). It catalyses the reaction (S)-carnitine(out) + Na(+)(out) = (S)-carnitine(in) + Na(+)(in). The catalysed reaction is an O-acyl-(R)-carnitine(out) + Na(+)(out) = an O-acyl-(R)-carnitine(in) + Na(+)(in). It carries out the reaction L-glutamyl-L-arginyl-glycyl-L-methionyl-L-threonine(out) + Na(+)(out) = L-glutamyl-L-arginyl-glycyl-L-methionyl-L-threonine(in) + Na(+)(in). The enzyme catalyses N,N-dimethylglycine(out) + Na(+)(out) = N,N-dimethylglycine(in) + Na(+)(in). Its activity is regulated as follows. Inhibited by emetine, quinidine and verapamil. The IC(50) of emetine is 4.2 uM. Not inhibited by valproic acid. Transport of (R)-carnitine is stimulated by cholesterol in the plasma membrane. Its function is as follows. Sodium-ion dependent, high affinity carnitine transporter. Involved in the active cellular uptake of carnitine. Transports one sodium ion with one molecule of carnitine. Also transports organic cations such as tetraethylammonium (TEA) without the involvement of sodium. Also relative uptake activity ratio of carnitine to TEA is 11.3. May also contribute to regulate the transport of organic compounds in testis across the blood-testis-barrier. The sequence is that of Organic cation/carnitine transporter 2 from Mus musculus (Mouse).